The sequence spans 297 residues: Protoheme IX farnesyltransferase (297 aa).

Transmembrane regions (helical) follow at residues 26–46 (VTQL…PGMV), 48–68 (YPVL…AFAV), 96–116 (LHII…LWNF), 120–140 (LTMW…TWLL), 147–167 (NIVI…AAVT), 174–194 (AWHL…ALAL), 218–238 (LLNI…PYIY), 245–265 (YLIS…ALFI), and 276–296 (FRFS…DHYF).

Belongs to the UbiA prenyltransferase family. Protoheme IX farnesyltransferase subfamily.

The protein localises to the cell inner membrane. The catalysed reaction is heme b + (2E,6E)-farnesyl diphosphate + H2O = Fe(II)-heme o + diphosphate. Its pathway is porphyrin-containing compound metabolism; heme O biosynthesis; heme O from protoheme: step 1/1. In terms of biological role, converts heme B (protoheme IX) to heme O by substitution of the vinyl group on carbon 2 of heme B porphyrin ring with a hydroxyethyl farnesyl side group. This is Protoheme IX farnesyltransferase from Polynucleobacter necessarius subsp. necessarius (strain STIR1).